The chain runs to 364 residues: Transcription factor IIIA (364 aa).

9 consecutive C2H2-type zinc fingers follow at residues 38-62 (FICSFPDCSASYNKAWKLDAHLCKH), 68-92 (FVCDYEGCGKAFIRDYHLSRHVLIH), 98-123 (FVCADDGCNQKFNTKSNLKKHIERKH), 130-154 (YVCSYEGCKKAFKKHQQLRTHQCQH), 160-184 (FRCTHEGCGKHFASPSRLKRHGKVH), 187-211 (YLCQKGCSFMGKTWTELLKHMREAH), 215-237 (ITCNVCQRMFKRRDYLKQHMKTH), 244-269 (YRCPRQGCGRTYTTVFNLQSHILSFH), and 275-299 (FVCEHAGCGKTFAMKQSLMRHSVVH). The tract at residues 299 to 364 (HDPDKKRMKL…PPPAALLTVC (66 aa)) is disordered. A compositionally biased stretch (low complexity) spans 338–352 (SLPNASAESSSSPEA).

The protein resides in the nucleus. Involved in ribosomal large subunit biogenesis. Binds the approximately 50 base pairs internal control region (ICR) of 5S ribosomal RNA genes. It is required for their RNA polymerase III-dependent transcription and may also maintain the transcription of other genes. Also binds the transcribed 5S RNA's. This chain is Transcription factor IIIA (Gtf3a), found in Mus musculus (Mouse).